Consider the following 119-residue polypeptide: Large ribosomal subunit protein bL20 (119 aa).

Belongs to the bacterial ribosomal protein bL20 family.

Its function is as follows. Binds directly to 23S ribosomal RNA and is necessary for the in vitro assembly process of the 50S ribosomal subunit. It is not involved in the protein synthesizing functions of that subunit. This chain is Large ribosomal subunit protein bL20, found in Erythrobacter litoralis (strain HTCC2594).